A 334-amino-acid polypeptide reads, in one-letter code: Malate dehydrogenase 2 (334 aa).

Position 12-18 (12-18 (GAAGRVA)) interacts with NAD(+). Residues Arg93 and Arg99 each contribute to the substrate site. NAD(+) is bound by residues Asn106, Gln113, and 130 to 132 (VGN). Substrate-binding residues include Asn132 and Arg166. Residue His191 is the Proton acceptor of the active site.

This sequence belongs to the LDH/MDH superfamily. MDH type 2 family.

The enzyme catalyses (S)-malate + NAD(+) = oxaloacetate + NADH + H(+). Functionally, catalyzes the reversible oxidation of malate to oxaloacetate. This is Malate dehydrogenase 2 from Albidiferax ferrireducens (strain ATCC BAA-621 / DSM 15236 / T118) (Rhodoferax ferrireducens).